Reading from the N-terminus, the 794-residue chain is Glutamine--tRNA ligase (794 aa).

The interval 192 to 217 is disordered; sequence DNEKPKKKKEKPAKVEDKAAPVATSE. The short motif at 277–287 is the 'HIGH' region element; the sequence is PEPNGYLHIGH. Residues 278–280 and 284–290 contribute to the ATP site; these read EPN and HIGHAKA. Residues Asp310 and Tyr450 each contribute to the L-glutamine site. Residues Thr469, 498–499, and 506–508 each bind ATP; these read RL and MSK. Residues 505-509 carry the 'KMSKS' region motif; sequence VMSKR.

Belongs to the class-I aminoacyl-tRNA synthetase family.

The enzyme catalyses tRNA(Gln) + L-glutamine + ATP = L-glutaminyl-tRNA(Gln) + AMP + diphosphate. The sequence is that of Glutamine--tRNA ligase from Lupinus luteus (European yellow lupine).